Here is a 341-residue protein sequence, read N- to C-terminus: UDP-3-O-(3-hydroxymyristoyl)glucosamine N-acyltransferase (341 aa).

Catalysis depends on histidine 239, which acts as the Proton acceptor.

Belongs to the transferase hexapeptide repeat family. LpxD subfamily. In terms of assembly, homotrimer.

It carries out the reaction a UDP-3-O-[(3R)-3-hydroxyacyl]-alpha-D-glucosamine + a (3R)-hydroxyacyl-[ACP] = a UDP-2-N,3-O-bis[(3R)-3-hydroxyacyl]-alpha-D-glucosamine + holo-[ACP] + H(+). The enzyme catalyses UDP-3-O-[(3R)-3-hydroxytetradecanoyl]-alpha-D-glucosamine + (3R)-hydroxytetradecanoyl-[ACP] = UDP-2-N,3-O-bis[(3R)-3-hydroxytetradecanoyl]-alpha-D-glucosamine + holo-[ACP] + H(+). It participates in glycolipid biosynthesis; lipid IV(A) biosynthesis; lipid IV(A) from (3R)-3-hydroxytetradecanoyl-[acyl-carrier-protein] and UDP-N-acetyl-alpha-D-glucosamine: step 3/6. In terms of biological role, catalyzes the N-acylation of UDP-3-O-(hydroxytetradecanoyl)glucosamine using 3-hydroxytetradecanoyl-ACP as the acyl donor. Is involved in the biosynthesis of lipid A, a phosphorylated glycolipid that anchors the lipopolysaccharide to the outer membrane of the cell. The sequence is that of UDP-3-O-(3-hydroxymyristoyl)glucosamine N-acyltransferase from Salmonella paratyphi A (strain ATCC 9150 / SARB42).